The chain runs to 236 residues: GLIPR1-like protein 1 (236 aa).

Positions 1 to 27 (MALKKKLNFLWTLVLYLIASRLPKAFG) are cleaved as a signal peptide. An SCP domain is found at 46-178 (LNIHNELRRK…FSAGLFVCNY (133 aa)). N-linked (GlcNAc...) asparagine glycosylation occurs at asparagine 126.

The protein belongs to the CRISP family. As to quaternary structure, part of a oolemmal binding multimeric complex (IZUMO1 complex) composed at least of IZUMO1 and GLIPR1L1; the complex assemblage is influenced by the maturation status of the male germ cell. Interacts with IZUMO1. In terms of processing, N-glycosylated. N-glycosylation decreases during the transit in the caput. In terms of tissue distribution, expressed in testis (at protein level). Little or no expression in other tissues tested.

The protein resides in the cytoplasmic vesicle. It is found in the secretory vesicle. It localises to the acrosome. The protein localises to the cell membrane. Its subcellular location is the membrane raft. The protein resides in the secreted. Required for optimal fertilization at the stage of sperm-oocyte fusion, plays a role in optimizing acrosome function, the translocation of IZUMO1 during the acrosome reaction and the fertilization process. Component of epididymosomes, one type of membranous microvesicules which mediate the transfer of lipids and proteins to spermatozoa plasma membrane during epididymal maturation. Also component of the CD9-positive microvesicules found in the cauda region. This is GLIPR1-like protein 1 from Mus musculus (Mouse).